The following is a 48-amino-acid chain: EACAGAYKSCDKVKCCHDRRCRCNIAMDNCVCKLFYCELFGTCDRLKP.

4 disulfides stabilise this stretch: cysteine 3–cysteine 16, cysteine 10–cysteine 21, cysteine 15–cysteine 32, and cysteine 23–cysteine 30.

This sequence belongs to the neurotoxin 02 (plectoxin) family. As to expression, expressed by the venom gland.

It localises to the secreted. The toxin blocks voltage-gated calcium channels in rat cerebellar granule cells (IC(50)=200 nM). This is Omega-agatoxin-Aa5a from Agelenopsis aperta (North American funnel-web spider).